The sequence spans 141 residues: Large ribosomal subunit protein uL11c (141 aa).

It belongs to the universal ribosomal protein uL11 family. As to quaternary structure, part of the ribosomal stalk of the 50S ribosomal subunit. Interacts with L10 and the large rRNA to form the base of the stalk. L10 forms an elongated spine to which L12 dimers bind in a sequential fashion forming a multimeric L10(L12)X complex.

It is found in the plastid. It localises to the chloroplast. Functionally, forms part of the ribosomal stalk which helps the ribosome interact with GTP-bound translation factors. This chain is Large ribosomal subunit protein uL11c, found in Pyropia yezoensis (Susabi-nori).